The sequence spans 500 residues: Signal transduction histidine-protein kinase/phosphatase UhpB (500 aa).

A run of 8 helical transmembrane segments spans residues 8–28, 78–98, 112–132, 140–160, 185–205, 207–224, 231–249, and 253–273; these read LITV…LWSI, VALA…LPVA, LLLQ…PWLG, ALLL…VFWH, HLIW…GLPA, LSRF…ALAW, ALIA…QTWH, and VDLL…GAGI. The Cytoplasmic portion of the chain corresponds to 274–500; sequence QRLRELNQSL…VSVSLPQRYV (227 aa). One can recognise a Histidine kinase domain in the interval 311–499; the sequence is ELHDDIGQTI…RVSVSLPQRY (189 aa). Position 313 is a phosphohistidine; by autocatalysis (His-313).

In terms of processing, autophosphorylated.

The protein localises to the cell inner membrane. It carries out the reaction ATP + protein L-histidine = ADP + protein N-phospho-L-histidine.. Its function is as follows. Part of the UhpABC signaling cascade that controls the expression of the hexose phosphate transporter UhpT. UhpB functions as a membrane-associated protein kinase that autophosphorylates in response to interaction with UhpC, and subsequently transfers its phosphate group to the response regulator UhpA. Can also dephosphorylate UhpA. The protein is Signal transduction histidine-protein kinase/phosphatase UhpB (uhpB) of Salmonella typhimurium (strain LT2 / SGSC1412 / ATCC 700720).